The chain runs to 189 residues: Early E3 20.5 kDa glycoprotein (189 aa).

N-linked (GlcNAc...) asparagine; by host glycosylation is found at Asn-73 and Asn-137.

The protein belongs to the adenoviridae E3_20 family.

E3 proteins seem to be dispensable for virus growth in tissue culture cells. They are potentially important for virus growth under special conditions; E3 region may help adenoviruses to evade the immune surveillance of the host. The sequence is that of Early E3 20.5 kDa glycoprotein from Homo sapiens (Human).